Consider the following 315-residue polypeptide: Protein SHORT INTERNODES 1 (315 aa).

The span at 1–10 (MAGFPLGGGS) shows a compositional bias: gly residues. Disordered regions lie at residues 1-24 (MAGFPLGGGSHSRDNPAPPVPPVH) and 64-92 (PPAPSLAGASSSSSSRGMRSSGGGGGGGG). The segment covering 70–82 (AGASSSSSSRGMR) has biased composition (low complexity). The span at 83-92 (SSGGGGGGGG) shows a compositional bias: gly residues. Positions 97, 100, 108, 113, 117, and 124 each coordinate Zn(2+). The segment at residues 97–124 (CQDCGNQAKKDCTHMRCRTCCKSRGFAC) is a DNA-binding region (zn(2)-C6 fungal-type; degenerate). Composition is skewed to low complexity over residues 143 to 156 (QQLAALAASAAATA) and 172 to 182 (RPSATTPTTSS). Residues 143–186 (QQLAALAASAAATAGGAGPSRDPTKRPRARPSATTPTTSSGDQQ) are disordered. Positions 227-230 (IGGH) match the Required for homo- and heterodimerization motif.

Belongs to the SHI protein family. Forms homodimers (via C-terminus). Interacts with SPL14/IPA1 (via C-terminus). Predominantly expressed in axillary buds and young panicles.

The protein localises to the nucleus. Regulates tillering and panicle branching by modulating SPL14/IPA1 transcriptional activity on the downstream TB1 and DEP1 target genes. Binds directly to the 5'-T/GCTCTAC-3' DNA motif found in the promoter regions of both TB1 and DEP1. Represses the DNA binding activity of SPL14/IPA1 toward the promoters of both TB1 and DEP1. Exhibits weak transcriptional activation activity in yeast cells. This Oryza sativa subsp. japonica (Rice) protein is Protein SHORT INTERNODES 1.